Consider the following 527-residue polypeptide: Dual specificity protein kinase shkA (527 aa).

Residues Ile45–Ile304 enclose the Protein kinase domain. Residues Leu51–Val59 and Lys72 each bind ATP. Asp167 acts as the Proton acceptor in catalysis. One can recognise an SH2 domain in the interval Trp424–Phe513.

It belongs to the protein kinase superfamily. TKL Ser/Thr protein kinase family. SH2 domain-containing protein kinase subfamily.

It localises to the membrane. It carries out the reaction L-seryl-[protein] + ATP = O-phospho-L-seryl-[protein] + ADP + H(+). It catalyses the reaction L-threonyl-[protein] + ATP = O-phospho-L-threonyl-[protein] + ADP + H(+). Its function is as follows. Required for proper chemotaxis and phagocytosis; proper spatiotemporal control of F-actin levels in chemotaxing cells. Negative regulator of the PI3K (phosphatidylinositol 3 kinase) pathway. Predominantly phosphorylates serines and threonines and tyrosines at a lower level. The chain is Dual specificity protein kinase shkA (shkA) from Dictyostelium discoideum (Social amoeba).